Consider the following 1077-residue polypeptide: Carbamoyl phosphate synthase large chain (1077 aa).

Residues 1–403 form a carboxyphosphate synthetic domain region; that stretch reads MPKRTDIQSI…SLHKALRGLE (403 aa). Residues Arg129, Arg169, Gly175, Gly176, Glu208, Leu210, Glu215, Gly241, Ile242, His243, Gln285, and Glu299 each contribute to the ATP site. One can recognise an ATP-grasp 1 domain in the interval 133 to 328; that stretch reads DKAMKSIGLE…IAKIAAKLAV (196 aa). 3 residues coordinate Mg(2+): Gln285, Glu299, and Asn301. Residues Gln285, Glu299, and Asn301 each coordinate Mn(2+). The oligomerization domain stretch occupies residues 404–553; that stretch reads VGATGFDEMV…YSSYDEECEA (150 aa). The tract at residues 554–935 is carbamoyl phosphate synthetic domain; it reads NPTDKDKIMV…AYAKAELGCG (382 aa). Positions 678 to 869 constitute an ATP-grasp 2 domain; that stretch reads QAAVERLGLL…LAKIAARVMA (192 aa). ATP contacts are provided by Arg714, Arg753, Leu755, Glu760, Gly785, Val786, His787, Ser788, Gln828, and Glu840. Mg(2+) contacts are provided by Gln828, Glu840, and Asn842. Mn(2+) contacts are provided by Gln828, Glu840, and Asn842. The MGS-like domain occupies 936–1077; it reads SVYPEGGRAL…HAKVKASLEA (142 aa). Positions 936-1077 are allosteric domain; the sequence is SVYPEGGRAL…HAKVKASLEA (142 aa).

It belongs to the CarB family. As to quaternary structure, composed of two chains; the small (or glutamine) chain promotes the hydrolysis of glutamine to ammonia, which is used by the large (or ammonia) chain to synthesize carbamoyl phosphate. Tetramer of heterodimers (alpha,beta)4. Requires Mg(2+) as cofactor. The cofactor is Mn(2+).

The catalysed reaction is hydrogencarbonate + L-glutamine + 2 ATP + H2O = carbamoyl phosphate + L-glutamate + 2 ADP + phosphate + 2 H(+). It carries out the reaction hydrogencarbonate + NH4(+) + 2 ATP = carbamoyl phosphate + 2 ADP + phosphate + 2 H(+). It participates in amino-acid biosynthesis; L-arginine biosynthesis; carbamoyl phosphate from bicarbonate: step 1/1. The protein operates within pyrimidine metabolism; UMP biosynthesis via de novo pathway; (S)-dihydroorotate from bicarbonate: step 1/3. Functionally, large subunit of the glutamine-dependent carbamoyl phosphate synthetase (CPSase). CPSase catalyzes the formation of carbamoyl phosphate from the ammonia moiety of glutamine, carbonate, and phosphate donated by ATP, constituting the first step of 2 biosynthetic pathways, one leading to arginine and/or urea and the other to pyrimidine nucleotides. The large subunit (synthetase) binds the substrates ammonia (free or transferred from glutamine from the small subunit), hydrogencarbonate and ATP and carries out an ATP-coupled ligase reaction, activating hydrogencarbonate by forming carboxy phosphate which reacts with ammonia to form carbamoyl phosphate. This chain is Carbamoyl phosphate synthase large chain, found in Vibrio parahaemolyticus serotype O3:K6 (strain RIMD 2210633).